Consider the following 884-residue polypeptide: Chondroitin sulfate synthase 3 (884 aa).

The Cytoplasmic segment spans residues 1–7 (MAVRSRR). The chain crosses the membrane as a helical; Signal-anchor for type II membrane protein span at residues 8-28 (PWVSVALGLVLGFTAASWLIA). The Lumenal portion of the chain corresponds to 29 to 884 (PRVAELSEKR…LGVRDNRTLS (856 aa)). A disordered region spans residues 47-164 (YYGRSATGPR…NGSGDGGAAV (118 aa)). 2 stretches are compositionally biased toward low complexity: residues 60–69 (QQLLPQPQSR) and 84–96 (PGPQ…PGGP). 2 N-linked (GlcNAc...) asparagine glycosylation sites follow: Asn-155 and Asn-281. The segment at 437 to 456 (SNSEVSKEDQQLGRTPSFNH) is disordered. Asn-712 carries an N-linked (GlcNAc...) asparagine glycan. The a divalent metal cation site is built by Asp-722 and His-836. Residue Asn-880 is glycosylated (N-linked (GlcNAc...) asparagine).

The protein belongs to the chondroitin N-acetylgalactosaminyltransferase family. It depends on Co(2+) as a cofactor. Mn(2+) serves as cofactor. The cofactor is Cd(2+).

Its subcellular location is the golgi apparatus. It is found in the golgi stack membrane. The enzyme catalyses 3-O-(beta-D-GlcA-(1-&gt;3)-beta-D-GalNAc-(1-&gt;4)-beta-D-GlcA-(1-&gt;3)-beta-D-Gal-(1-&gt;3)-beta-D-Gal-(1-&gt;4)-beta-D-Xyl)-L-seryl-[protein] + UDP-N-acetyl-alpha-D-galactosamine = 3-O-(beta-D-GalNAc-(1-&gt;4)-beta-D-GlcA-(1-&gt;3)-beta-D-GalNAc-(1-&gt;4)-beta-D-GlcA-(1-&gt;3)-beta-D-Gal-(1-&gt;3)-beta-D-Gal-(1-&gt;4)-beta-D-Xyl)-L-seryl-[protein] + UDP + H(+). It catalyses the reaction 3-O-{beta-D-GlcA-(1-&gt;3)-[beta-D-GalNAc-(1-&gt;4)-beta-D-GlcA-(1-&gt;3)](n)-beta-D-GalNAc-(1-&gt;4)-beta-D-GlcA-(1-&gt;3)-beta-D-Gal-(1-&gt;3)-beta-D-Gal-(1-&gt;4)-beta-D-Xyl}-L-seryl-[protein] + UDP-N-acetyl-alpha-D-galactosamine = 3-O-{[beta-D-GalNAc-(1-&gt;4)-beta-D-GlcA-(1-&gt;3)](n+1)-beta-D-GalNAc-(1-&gt;4)-beta-D-GlcA-(1-&gt;3)-beta-D-Gal-(1-&gt;3)-beta-D-Gal-(1-&gt;4)-beta-D-Xyl}-L-seryl-[protein] + UDP + H(+). It carries out the reaction 3-O-(beta-D-GalNAc-(1-&gt;4)-beta-D-GlcA-(1-&gt;3)-beta-D-Gal-(1-&gt;3)-beta-D-Gal-(1-&gt;4)-beta-D-Xyl)-L-seryl-[protein] + UDP-alpha-D-glucuronate = 3-O-(beta-D-GlcA-(1-&gt;3)-beta-D-GalNAc-(1-&gt;4)-beta-D-GlcA-(1-&gt;3)-beta-D-Gal-(1-&gt;3)-beta-D-Gal-(1-&gt;4)-beta-D-Xyl)-L-seryl-[protein] + UDP + H(+). The catalysed reaction is 3-O-{[beta-D-GalNAc-(1-&gt;4)-beta-D-GlcA-(1-&gt;3)](n)-beta-D-GalNAc-(1-&gt;4)-beta-D-GlcA-(1-&gt;3)-beta-D-Gal-(1-&gt;3)-beta-D-Gal-(1-&gt;4)-beta-D-Xyl}-L-seryl-[protein] + UDP-alpha-D-glucuronate = 3-O-{beta-D-GlcA-(1-&gt;3)-[beta-D-GalNAc-(1-&gt;4)-beta-D-GlcA-(1-&gt;3)](n)-beta-D-GalNAc-(1-&gt;4)-beta-D-GlcA-(1-&gt;3)-beta-D-Gal-(1-&gt;3)-beta-D-Gal-(1-&gt;4)-beta-D-Xyl}-L-seryl-[protein] + UDP + H(+). In terms of biological role, has both beta-1,3-glucuronic acid and beta-1,4-N-acetylgalactosamine transferase activity. Transfers glucuronic acid (GlcUA) from UDP-GlcUA and N-acetylgalactosamine (GalNAc) from UDP-GalNAc to the non-reducing end of the elongating chondroitin polymer. Specific activity is much reduced compared to CHSY1. This chain is Chondroitin sulfate synthase 3 (Chsy3), found in Mus musculus (Mouse).